We begin with the raw amino-acid sequence, 589 residues long: Arginine--tRNA ligase (589 aa).

The 'HIGH' region signature appears at 132–142 (PNTNKPLHVGH).

This sequence belongs to the class-I aminoacyl-tRNA synthetase family. In terms of assembly, monomer.

It localises to the cytoplasm. It catalyses the reaction tRNA(Arg) + L-arginine + ATP = L-arginyl-tRNA(Arg) + AMP + diphosphate. The chain is Arginine--tRNA ligase from Treponema pallidum subsp. pallidum (strain SS14).